A 912-amino-acid polypeptide reads, in one-letter code: Microtubule-associated protein 10 (912 aa).

6 disordered regions span residues 31–50 (VAEEEQKEEGEGASPPRPSR), 209–239 (KSVEVSPQTWQENQQLQQPDSEPSPGDADKP), 254–296 (GRAF…QEGT), 335–366 (ASEEWDDGTFLKENVNPPTHTNPPEHTNSATG), 443–469 (SPESSVKSTCKSESKKDKLSVGENEKS), and 730–859 (RACD…VSSY). A compositionally biased stretch (polar residues) spans 211–229 (VEVSPQTWQENQQLQQPDS). Over residues 254–263 (GRAFHSKADS) the composition is skewed to basic and acidic residues. Residues 266 to 295 (TDSMENGKTNSDMCSKGSSERSVSPPNQEG) are compositionally biased toward polar residues. Residues 347 to 362 (ENVNPPTHTNPPEHTN) are compositionally biased toward low complexity. The segment covering 452-468 (CKSESKKDKLSVGENEK) has biased composition (basic and acidic residues). Over residues 735-768 (SPGTENPKNSQHTSTSSETRLSIRKNSSAKSSIL) the composition is skewed to polar residues. Residues 796–807 (EASSSDFSSSQW) show a composition bias toward low complexity. Over residues 841–859 (GCKSSEKSQSPRTSQVSSY) the composition is skewed to polar residues.

Interacts (via middle region) with microtubules.

Its subcellular location is the cytoplasm. The protein localises to the cytoskeleton. The protein resides in the spindle pole. It is found in the microtubule organizing center. It localises to the centrosome. Its subcellular location is the midbody. Functionally, microtubule-associated protein (MAP) that plays a role in the regulation of cell division; promotes microtubule stability and participates in the organization of the spindle midzone and normal progress of cytokinesis. This chain is Microtubule-associated protein 10 (MAP10), found in Bos taurus (Bovine).